The chain runs to 636 residues: Biosynthetic arginine decarboxylase (636 aa).

Residue Lys101 is modified to N6-(pyridoxal phosphate)lysine. Residue 286 to 296 (FDVGGGLAVDY) participates in substrate binding.

The protein belongs to the Orn/Lys/Arg decarboxylase class-II family. SpeA subfamily. The cofactor is Mg(2+). Requires pyridoxal 5'-phosphate as cofactor.

It catalyses the reaction L-arginine + H(+) = agmatine + CO2. It participates in amine and polyamine biosynthesis; agmatine biosynthesis; agmatine from L-arginine: step 1/1. Its function is as follows. Catalyzes the biosynthesis of agmatine from arginine. This Shewanella amazonensis (strain ATCC BAA-1098 / SB2B) protein is Biosynthetic arginine decarboxylase.